Here is a 311-residue protein sequence, read N- to C-terminus: MRRNCTLVTEFILLGLTSRRELQILLFTLFLAIYMVTVAGNLGMIVLIQANAWLHMPMYFFLSHLSFVDLCFSSNVTPKMLEIFLSEKKSISYPACLVQCYLFIALVHVEIYILAVMAFDRYMAICNPLLYGSRMSKSVCSFLITVPYVYGALTGLMETMWTYNLAFCGPNEINHFYCADPPLIKLACSDTYNKELSMFIVAGWNLSFSLFIICISYLYIFPAILKIRSTEGRQKAFSTCGSHLTAVTIFYATLFFMYLRPPSKESVEQGKMVAVFYTTVIPMLNLIIYSLRNKNVKEALIKELSMKIYFS.

At 1 to 24 (MRRNCTLVTEFILLGLTSRRELQI) the chain is on the extracellular side. N-linked (GlcNAc...) asparagine glycosylation occurs at Asn-4. The chain crosses the membrane as a helical span at residues 25–45 (LLFTLFLAIYMVTVAGNLGMI). Residues 46 to 53 (VLIQANAW) lie on the Cytoplasmic side of the membrane. A helical transmembrane segment spans residues 54 to 74 (LHMPMYFFLSHLSFVDLCFSS). At 75-98 (NVTPKMLEIFLSEKKSISYPACLV) the chain is on the extracellular side. A disulfide bridge links Cys-96 with Cys-188. Residues 99–119 (QCYLFIALVHVEIYILAVMAF) form a helical membrane-spanning segment. Residues 120–138 (DRYMAICNPLLYGSRMSKS) lie on the Cytoplasmic side of the membrane. The helical transmembrane segment at 139–159 (VCSFLITVPYVYGALTGLMET) threads the bilayer. Residues 160-195 (MWTYNLAFCGPNEINHFYCADPPLIKLACSDTYNKE) lie on the Extracellular side of the membrane. The chain crosses the membrane as a helical span at residues 196-216 (LSMFIVAGWNLSFSLFIICIS). Topologically, residues 217 to 236 (YLYIFPAILKIRSTEGRQKA) are cytoplasmic. A helical membrane pass occupies residues 237–257 (FSTCGSHLTAVTIFYATLFFM). Residues 258-270 (YLRPPSKESVEQG) lie on the Extracellular side of the membrane. Residues 271–291 (KMVAVFYTTVIPMLNLIIYSL) traverse the membrane as a helical segment. Topologically, residues 292–311 (RNKNVKEALIKELSMKIYFS) are cytoplasmic.

The protein belongs to the G-protein coupled receptor 1 family.

It is found in the cell membrane. In terms of biological role, odorant receptor. This chain is Olfactory receptor 5M8 (OR5M8), found in Homo sapiens (Human).